A 537-amino-acid polypeptide reads, in one-letter code: uncharacterized protein (537 aa).

An N-terminal signal peptide occupies residues M1 to G15. 2 consecutive transmembrane segments (helical) span residues V459–F479 and V490–T510.

It is found in the host membrane. This is an uncharacterized protein from Citrus sinensis (Sweet orange).